We begin with the raw amino-acid sequence, 49 residues long: Large ribosomal subunit protein bL33 (49 aa).

This sequence belongs to the bacterial ribosomal protein bL33 family.

The polypeptide is Large ribosomal subunit protein bL33 (Desulforudis audaxviator (strain MP104C)).